A 662-amino-acid chain; its full sequence is Bifunctional polymyxin resistance protein ArnA (662 aa).

Positions 1-307 (MTSKAVVFAY…ELGLVEGARL (307 aa)) are formyltransferase ArnAFT. His106 (proton donor; for formyltransferase activity) is an active-site residue. Residues Arg116 and 138–142 (VERAD) each bind (6R)-10-formyltetrahydrofolate. The tract at residues 316–662 (RRTRVLILGV…EALREREAQA (347 aa)) is dehydrogenase ArnADH. NAD(+) is bound by residues Asp349 and 370–371 (DI). UDP-alpha-D-glucuronate contacts are provided by residues Ala395, Tyr400, and 434–435 (TS). The active-site Proton acceptor; for decarboxylase activity is Glu436. Residues Arg462, Asn493, 527–536 (RLVDGGAQKR), and Tyr614 contribute to the UDP-alpha-D-glucuronate site. Arg620 serves as the catalytic Proton donor; for decarboxylase activity.

It in the N-terminal section; belongs to the Fmt family. UDP-L-Ara4N formyltransferase subfamily. In the C-terminal section; belongs to the NAD(P)-dependent epimerase/dehydratase family. UDP-glucuronic acid decarboxylase subfamily. As to quaternary structure, homohexamer, formed by a dimer of trimers.

It carries out the reaction UDP-alpha-D-glucuronate + NAD(+) = UDP-beta-L-threo-pentopyranos-4-ulose + CO2 + NADH. It catalyses the reaction UDP-4-amino-4-deoxy-beta-L-arabinose + (6R)-10-formyltetrahydrofolate = UDP-4-deoxy-4-formamido-beta-L-arabinose + (6S)-5,6,7,8-tetrahydrofolate + H(+). The protein operates within nucleotide-sugar biosynthesis; UDP-4-deoxy-4-formamido-beta-L-arabinose biosynthesis; UDP-4-deoxy-4-formamido-beta-L-arabinose from UDP-alpha-D-glucuronate: step 1/3. Its pathway is nucleotide-sugar biosynthesis; UDP-4-deoxy-4-formamido-beta-L-arabinose biosynthesis; UDP-4-deoxy-4-formamido-beta-L-arabinose from UDP-alpha-D-glucuronate: step 3/3. It participates in bacterial outer membrane biogenesis; lipopolysaccharide biosynthesis. Its function is as follows. Bifunctional enzyme that catalyzes the oxidative decarboxylation of UDP-glucuronic acid (UDP-GlcUA) to UDP-4-keto-arabinose (UDP-Ara4O) and the addition of a formyl group to UDP-4-amino-4-deoxy-L-arabinose (UDP-L-Ara4N) to form UDP-L-4-formamido-arabinose (UDP-L-Ara4FN). The modified arabinose is attached to lipid A and is required for resistance to polymyxin and cationic antimicrobial peptides. The sequence is that of Bifunctional polymyxin resistance protein ArnA from Pseudomonas paraeruginosa (strain DSM 24068 / PA7) (Pseudomonas aeruginosa (strain PA7)).